The following is a 376-amino-acid chain: Protein RecA (376 aa).

Residue Gly-65–Thr-72 participates in ATP binding. A disordered region spans residues Glu-316–Tyr-376. Positions Gly-331–Ala-350 are enriched in basic and acidic residues. Residues Pro-366–Tyr-376 show a composition bias toward acidic residues.

The protein belongs to the RecA family.

It is found in the cytoplasm. Its function is as follows. Can catalyze the hydrolysis of ATP in the presence of single-stranded DNA, the ATP-dependent uptake of single-stranded DNA by duplex DNA, and the ATP-dependent hybridization of homologous single-stranded DNAs. It interacts with LexA causing its activation and leading to its autocatalytic cleavage. The chain is Protein RecA from Oenococcus oeni (strain ATCC BAA-331 / PSU-1).